The primary structure comprises 316 residues: Putative ubiquitin-conjugating enzyme E2 39 (316 aa).

Positions 57–217 constitute a UBC core domain; the sequence is NWVKDIQKEW…VFVFSLKTMH (161 aa). The active-site Glycyl thioester intermediate is Cys143.

Belongs to the ubiquitin-conjugating enzyme family.

The catalysed reaction is S-ubiquitinyl-[E1 ubiquitin-activating enzyme]-L-cysteine + [E2 ubiquitin-conjugating enzyme]-L-cysteine = [E1 ubiquitin-activating enzyme]-L-cysteine + S-ubiquitinyl-[E2 ubiquitin-conjugating enzyme]-L-cysteine.. It participates in protein modification; protein ubiquitination. Its function is as follows. Accepts the ubiquitin from the E1 complex and catalyzes its covalent attachment to other proteins. The polypeptide is Putative ubiquitin-conjugating enzyme E2 39 (UBC39) (Arabidopsis thaliana (Mouse-ear cress)).